A 964-amino-acid polypeptide reads, in one-letter code: Glycine dehydrogenase (decarboxylating) (964 aa).

The span at 1–11 (MNSTLQNQTKT) shows a compositional bias: polar residues. Positions 1–21 (MNSTLQNQTKTNLEKVGTDPL) are disordered. An N6-(pyridoxal phosphate)lysine modification is found at K713.

Belongs to the GcvP family. In terms of assembly, the glycine cleavage system is composed of four proteins: P, T, L and H. Pyridoxal 5'-phosphate is required as a cofactor.

The enzyme catalyses N(6)-[(R)-lipoyl]-L-lysyl-[glycine-cleavage complex H protein] + glycine + H(+) = N(6)-[(R)-S(8)-aminomethyldihydrolipoyl]-L-lysyl-[glycine-cleavage complex H protein] + CO2. In terms of biological role, the glycine cleavage system catalyzes the degradation of glycine. The P protein binds the alpha-amino group of glycine through its pyridoxal phosphate cofactor; CO(2) is released and the remaining methylamine moiety is then transferred to the lipoamide cofactor of the H protein. The polypeptide is Glycine dehydrogenase (decarboxylating) (Leptospira interrogans serogroup Icterohaemorrhagiae serovar copenhageni (strain Fiocruz L1-130)).